The chain runs to 291 residues: 4-hydroxy-tetrahydrodipicolinate synthase (291 aa).

Pyruvate is bound at residue Thr44. Residue Tyr132 is the Proton donor/acceptor of the active site. The active-site Schiff-base intermediate with substrate is the Lys160. Val202 is a pyruvate binding site.

This sequence belongs to the DapA family. Homotetramer; dimer of dimers.

The protein resides in the cytoplasm. It catalyses the reaction L-aspartate 4-semialdehyde + pyruvate = (2S,4S)-4-hydroxy-2,3,4,5-tetrahydrodipicolinate + H2O + H(+). It participates in amino-acid biosynthesis; L-lysine biosynthesis via DAP pathway; (S)-tetrahydrodipicolinate from L-aspartate: step 3/4. Functionally, catalyzes the condensation of (S)-aspartate-beta-semialdehyde [(S)-ASA] and pyruvate to 4-hydroxy-tetrahydrodipicolinate (HTPA). In Clostridium perfringens (strain 13 / Type A), this protein is 4-hydroxy-tetrahydrodipicolinate synthase.